We begin with the raw amino-acid sequence, 119 residues long: Acidic phospholipase A2 2 (119 aa).

7 cysteine pairs are disulfide-bonded: cysteine 11-cysteine 71, cysteine 26-cysteine 118, cysteine 28-cysteine 44, cysteine 43-cysteine 99, cysteine 50-cysteine 92, cysteine 60-cysteine 85, and cysteine 78-cysteine 90. Ca(2+) is bound by residues tyrosine 27, glycine 29, and glycine 31. Histidine 47 is a catalytic residue. Aspartate 48 provides a ligand contact to Ca(2+). Aspartate 93 is an active-site residue.

Belongs to the phospholipase A2 family. Group I subfamily. D49 sub-subfamily. As to quaternary structure, homotrimer. Requires Ca(2+) as cofactor. In terms of tissue distribution, expressed by the venom gland.

Its subcellular location is the secreted. It carries out the reaction a 1,2-diacyl-sn-glycero-3-phosphocholine + H2O = a 1-acyl-sn-glycero-3-phosphocholine + a fatty acid + H(+). Functionally, PLA2 catalyzes the calcium-dependent hydrolysis of the 2-acyl groups in 3-sn-phosphoglycerides. In Naja naja (Indian cobra), this protein is Acidic phospholipase A2 2.